A 215-amino-acid polypeptide reads, in one-letter code: N-(5'-phosphoribosyl)anthranilate isomerase (215 aa).

It belongs to the TrpF family.

The enzyme catalyses N-(5-phospho-beta-D-ribosyl)anthranilate = 1-(2-carboxyphenylamino)-1-deoxy-D-ribulose 5-phosphate. The protein operates within amino-acid biosynthesis; L-tryptophan biosynthesis; L-tryptophan from chorismate: step 3/5. The protein is N-(5'-phosphoribosyl)anthranilate isomerase of Paracoccus denitrificans (strain Pd 1222).